The primary structure comprises 293 residues: Methylsterol monooxygenase 1 (293 aa).

A run of 2 helical transmembrane segments spans residues 55–75 (LIVHEALYFLFCLPGFLFQFI) and 100–120 (VLLFNHFCIQLPLICGTYYFT). Positions 145 to 274 (CAVIEDTWHY…FTWWDRIFGT (130 aa)) constitute a Fatty acid hydroxylase domain. Residues 157–161 (HRLLH) carry the Histidine box-1 motif. A Histidine box-2 motif is present at residues 170–174 (HKVHH). A helical transmembrane segment spans residues 199–219 (FFIGIVLLCDHVILLWAWVTI). A Histidine box-3 motif is present at residues 249–255 (HHDFHHM).

It belongs to the sterol desaturase family. Requires Fe cation as cofactor. Ubiquitinated by MARCHF6, leading to proteasomal degradation.

The protein resides in the endoplasmic reticulum membrane. It carries out the reaction 4,4-dimethyl-5alpha-cholest-7-en-3beta-ol + 6 Fe(II)-[cytochrome b5] + 3 O2 + 5 H(+) = 4alpha-carboxy-4beta-methyl-5alpha-cholest-7-ene-3beta-ol + 6 Fe(III)-[cytochrome b5] + 4 H2O. It catalyses the reaction 4,4-dimethyl-5alpha-cholesta-8,24-dien-3beta-ol + 6 Fe(II)-[cytochrome b5] + 3 O2 + 5 H(+) = 4beta-methylzymosterol-4alpha-carboxylate + 6 Fe(III)-[cytochrome b5] + 4 H2O. The catalysed reaction is 4alpha-methylzymosterol + 6 Fe(II)-[cytochrome b5] + 3 O2 + 5 H(+) = 4alpha-carboxyzymosterol + 6 Fe(III)-[cytochrome b5] + 4 H2O. The enzyme catalyses 4alpha-methyl-5alpha-cholest-7-en-3beta-ol + 6 Fe(II)-[cytochrome b5] + 3 O2 + 5 H(+) = 4alpha-carboxy-5alpha-cholest-7-en-3beta-ol + 6 Fe(III)-[cytochrome b5] + 4 H2O. It carries out the reaction 4,4-dimethyl-5alpha-cholest-8-en-3beta-ol + 6 Fe(II)-[cytochrome b5] + 3 O2 + 5 H(+) = 4alpha-carboxy-4beta-methyl-5alpha-cholest-8-en-3beta-ol + 6 Fe(III)-[cytochrome b5] + 4 H2O. It catalyses the reaction 4alpha-methyl-5alpha-cholest-8-en-3beta-ol + 6 Fe(II)-[cytochrome b5] + 3 O2 + 5 H(+) = 4alpha-carboxy-5alpha-cholest-8-ene-3beta-ol + 6 Fe(III)-[cytochrome b5] + 4 H2O. It functions in the pathway steroid biosynthesis; zymosterol biosynthesis; zymosterol from lanosterol: step 3/6. Its pathway is steroid biosynthesis; cholesterol biosynthesis. In terms of biological role, catalyzes the three-step monooxygenation required for the demethylation of 4,4-dimethyl and 4alpha-methylsterols, which can be subsequently metabolized to cholesterol. The sequence is that of Methylsterol monooxygenase 1 (MSMO1) from Pongo abelii (Sumatran orangutan).